We begin with the raw amino-acid sequence, 276 residues long: NADPH-dependent 7-cyano-7-deazaguanine reductase (276 aa).

Residue 83 to 85 (IES) participates in substrate binding. 85 to 86 (SK) provides a ligand contact to NADPH. Cys-184 (thioimide intermediate) is an active-site residue. Asp-191 functions as the Proton donor in the catalytic mechanism. 223–224 (HE) lines the substrate pocket. 252 to 253 (RG) contacts NADPH.

Belongs to the GTP cyclohydrolase I family. QueF type 2 subfamily. In terms of assembly, homodimer.

It is found in the cytoplasm. The catalysed reaction is 7-aminomethyl-7-carbaguanine + 2 NADP(+) = 7-cyano-7-deazaguanine + 2 NADPH + 3 H(+). Its pathway is tRNA modification; tRNA-queuosine biosynthesis. Its function is as follows. Catalyzes the NADPH-dependent reduction of 7-cyano-7-deazaguanine (preQ0) to 7-aminomethyl-7-deazaguanine (preQ1). This is NADPH-dependent 7-cyano-7-deazaguanine reductase from Desulfotalea psychrophila (strain LSv54 / DSM 12343).